Here is a 362-residue protein sequence, read N- to C-terminus: Histidinol-phosphate aminotransferase (362 aa).

Lys220 is subject to N6-(pyridoxal phosphate)lysine.

Belongs to the class-II pyridoxal-phosphate-dependent aminotransferase family. Histidinol-phosphate aminotransferase subfamily. As to quaternary structure, homodimer. It depends on pyridoxal 5'-phosphate as a cofactor.

The enzyme catalyses L-histidinol phosphate + 2-oxoglutarate = 3-(imidazol-4-yl)-2-oxopropyl phosphate + L-glutamate. The protein operates within amino-acid biosynthesis; L-histidine biosynthesis; L-histidine from 5-phospho-alpha-D-ribose 1-diphosphate: step 7/9. The protein is Histidinol-phosphate aminotransferase of Rhodospirillum centenum (strain ATCC 51521 / SW).